A 443-amino-acid polypeptide reads, in one-letter code: Eukaryotic translation initiation factor 5 (443 aa).

Residue 29–36 (GRGNGIKT) participates in GTP binding. Positions 147–178 (PEVKKGSKDKKAMRRAEKERLKEGEAADEELK) are enriched in basic and acidic residues. 2 disordered regions span residues 147–244 (PEVK…LTDT) and 271–293 (EPEK…NSKN). The segment covering 179 to 188 (KVKKEVKKKG) has biased composition (basic residues). Residues 207-227 (SGSDEDRRSPTHKQIEEKEEA) are compositionally biased toward basic and acidic residues. The span at 228–237 (KDEDDDDDDG) shows a compositional bias: acidic residues. The segment covering 280–291 (SNQNGGSQNGNS) has biased composition (low complexity). Positions 284-443 (GGSQNGNSKN…QNAESESDEE (160 aa)) constitute a W2 domain.

It belongs to the eIF-2-beta/eIF-5 family.

Its function is as follows. Catalyzes the hydrolysis of GTP bound to the 40S ribosomal initiation complex (40S.mRNA.Met-tRNA[F].eIF-2.GTP) with the subsequent joining of a 60S ribosomal subunit resulting in the release of eIF-2 and the guanine nucleotide. The subsequent joining of a 60S ribosomal subunit results in the formation of a functional 80S initiation complex (80S.mRNA.Met-tRNA[F]). This is Eukaryotic translation initiation factor 5 (EIF5) from Phaseolus vulgaris (Kidney bean).